The primary structure comprises 363 residues: FMNH(2)-dependent dimethylsulfone monooxygenase (363 aa).

This sequence belongs to the SsuD family.

The catalysed reaction is dimethyl sulfone + FMNH2 + O2 = methanesulfinate + FMN + formaldehyde + H2O + 2 H(+). In terms of biological role, involved in the dimethyl sulfide degradation pathway. Catalyzes the oxidation of dimethylsulfone (DMSO2) to yield methanesulfinate, which is oxidized spontaneously to methanesulfonate in the presence of dioxygen and FMNH(2). In Pseudomonas putida (Arthrobacter siderocapsulatus), this protein is FMNH(2)-dependent dimethylsulfone monooxygenase.